The sequence spans 458 residues: MLFNFIKDKNKHIHFIGIGGISMSGLAEILLYHNFTISGSDMNSSPITKKLKDKGAHIYIGHKKENIKDADLIVYTAAIASDNPEIIEAKEKNIKLMDRADFLGDLMKGYKYNIAISGTHGKTTTTSMLSHVALKANVDPTILVGGNLDIINGNVRVGKSDFFITEACEYKSSFLKFFPYIGAILNIDADHLDYYRDLNDIKNAFSKFIKLIPKDGYLVAYGEDKNIQSIIKEANCNVITYGINSGDIQAHNIEYDEKACGNFDVVKDNQKLFSVKLNVPGKHNILNSLASICIGLASNMKCKDIIEGIESFFGTHRRFELKGCKNNITVIDDYAHHPTEISATLDAAKKYPHNKLFCVFQPHTYSRTLTLFDDFTKCFDNADEIILADIYAAREKDTGIISSDMLGDKLRDRGLKCTNFHKFDDIKNYLIENAKDGDLILTVGAGDIYKVGEMYINL.

118–124 (GTHGKTT) is an ATP binding site.

The protein belongs to the MurCDEF family.

It is found in the cytoplasm. The enzyme catalyses UDP-N-acetyl-alpha-D-muramate + L-alanine + ATP = UDP-N-acetyl-alpha-D-muramoyl-L-alanine + ADP + phosphate + H(+). The protein operates within cell wall biogenesis; peptidoglycan biosynthesis. Functionally, cell wall formation. In Clostridium botulinum (strain Kyoto / Type A2), this protein is UDP-N-acetylmuramate--L-alanine ligase.